The following is a 219-amino-acid chain: Claudin-6 (219 aa).

The Cytoplasmic portion of the chain corresponds to 1 to 7; it reads MASTGLQ. A helical membrane pass occupies residues 8 to 28; that stretch reads ILGIVLTLLGWVNALVSCALP. Over 29-81 the chain is Extracellular; sequence MWKVTAFIGNSIVVAQMVWEGLWMSCVVQSTGQMQCKVYDSLLALPQDLQAAR. A helical transmembrane segment spans residues 82-102; the sequence is ALCVVTLLIVLLGLLVYLAGA. Over 103-116 the chain is Cytoplasmic; sequence KCTTCVEDRNSKSR. Residues 117–137 traverse the membrane as a helical segment; that stretch reads LVLISGIIFVISGVLTLIPVC. The Extracellular portion of the chain corresponds to 138 to 163; it reads WTAHSIIQDFYNPLVADAQKRELGAS. Residues 164–184 form a helical membrane-spanning segment; that stretch reads LYLGWAASGLLLLGGGLLCCA. At 185-219 the chain is on the cytoplasmic side; the sequence is CSSGGTQGPRHYMACYSTSVPHSRGPSEYPTKNYV. Phosphoserine is present on residues Ser201, Ser203, Ser207, and Ser211. The interactions with TJP1, TJP2 and TJP3 stretch occupies residues 218–219; the sequence is YV.

It belongs to the claudin family. As to quaternary structure, directly interacts with TJP1/ZO-1, TJP2/ZO-2 and TJP3/ZO-3. Interacts with CLDN1, CD81 and OCLN. As to expression, expressed mostly in embryonic tissues.

The protein localises to the cell junction. The protein resides in the tight junction. It is found in the cell membrane. Its function is as follows. Plays a major role in tight junction-specific obliteration of the intercellular space, through calcium-independent cell-adhesion activity. The protein is Claudin-6 (Cldn6) of Mus musculus (Mouse).